Reading from the N-terminus, the 81-residue chain is ATP synthase subunit c, chloroplastic (81 aa).

2 consecutive transmembrane segments (helical) span residues 3–23 (PLIS…ASIG) and 53–73 (LLLS…VALA).

This sequence belongs to the ATPase C chain family. In terms of assembly, F-type ATPases have 2 components, F(1) - the catalytic core - and F(0) - the membrane proton channel. F(1) has five subunits: alpha(3), beta(3), gamma(1), delta(1), epsilon(1). F(0) has four main subunits: a(1), b(1), b'(1) and c(10-14). The alpha and beta chains form an alternating ring which encloses part of the gamma chain. F(1) is attached to F(0) by a central stalk formed by the gamma and epsilon chains, while a peripheral stalk is formed by the delta, b and b' chains.

It is found in the plastid. Its subcellular location is the chloroplast thylakoid membrane. Functionally, f(1)F(0) ATP synthase produces ATP from ADP in the presence of a proton or sodium gradient. F-type ATPases consist of two structural domains, F(1) containing the extramembraneous catalytic core and F(0) containing the membrane proton channel, linked together by a central stalk and a peripheral stalk. During catalysis, ATP synthesis in the catalytic domain of F(1) is coupled via a rotary mechanism of the central stalk subunits to proton translocation. In terms of biological role, key component of the F(0) channel; it plays a direct role in translocation across the membrane. A homomeric c-ring of between 10-14 subunits forms the central stalk rotor element with the F(1) delta and epsilon subunits. The polypeptide is ATP synthase subunit c, chloroplastic (Huperzia lucidula (Shining clubmoss)).